A 487-amino-acid chain; its full sequence is Betaine aldehyde dehydrogenase (487 aa).

I27 and D93 together coordinate K(+). 149 to 151 (GAW) is a binding site for NAD(+). The active-site Charge relay system is the K161. Residues 175–178 (KPSE) and 228–231 (SVPT) each bind NAD(+). L243 provides a ligand contact to K(+). E249 acts as the Proton acceptor in catalysis. 3 residues coordinate NAD(+): G251, C283, and E384. Residue C283 is the Nucleophile of the active site. C283 is modified (cysteine sulfenic acid (-SOH)). Residues K454 and G457 each contribute to the K(+) site. E461 acts as the Charge relay system in catalysis.

It belongs to the aldehyde dehydrogenase family. In terms of assembly, dimer of dimers. The cofactor is K(+).

The catalysed reaction is betaine aldehyde + NAD(+) + H2O = glycine betaine + NADH + 2 H(+). Its pathway is amine and polyamine biosynthesis; betaine biosynthesis via choline pathway; betaine from betaine aldehyde: step 1/1. Its function is as follows. Involved in the biosynthesis of the osmoprotectant glycine betaine. Catalyzes the irreversible oxidation of betaine aldehyde to the corresponding acid. This Brucella canis (strain ATCC 23365 / NCTC 10854 / RM-666) protein is Betaine aldehyde dehydrogenase.